A 664-amino-acid chain; its full sequence is Trifunctional UDP-glucose 4,6-dehydratase/UDP-4-keto-6-deoxy-D-glucose 3,5-epimerase/UDP-4-keto-L-rhamnose-reductase RHM3 (664 aa).

Residue 13 to 19 (GAAGFIA) participates in NAD(+) binding. T132 serves as a coordination point for substrate. The active-site Proton donor is the D133. Active-site proton acceptor residues include E134 and Y159. An NADP(+)-binding site is contributed by 386–392 (GKTGWLG).

It in the N-terminal section; belongs to the NAD(P)-dependent epimerase/dehydratase family. dTDP-glucose dehydratase subfamily. In the C-terminal section; belongs to the dTDP-4-dehydrorhamnose reductase family. It depends on NAD(+) as a cofactor. Requires NADP(+) as cofactor. In terms of tissue distribution, expressed in roots, stems, seedlings, and siliques. Lower expression in inflorescence tips, and leaves.

The enzyme catalyses UDP-alpha-D-glucose = UDP-4-dehydro-6-deoxy-alpha-D-glucose + H2O. It functions in the pathway carbohydrate biosynthesis. Trifunctional enzyme involved in UDP-beta-L-rhamnose biosynthesis, a precursor of the primary cell wall components rhamnogalacturonan I (RG-I) and rhamnogalacturonan II (RG-II). Catalyzes the dehydration of UDP-glucose to form UDP-4-dehydro-6-deoxy-D-glucose followed by the epimerization of the C3' and C5' positions of UDP-4-dehydro-6-deoxy-D-glucose to form UDP-4-keto-beta-L-rhamnose and the reduction of UDP-4-keto-beta-L-rhamnose to yield UDP-beta-L-rhamnose. The chain is Trifunctional UDP-glucose 4,6-dehydratase/UDP-4-keto-6-deoxy-D-glucose 3,5-epimerase/UDP-4-keto-L-rhamnose-reductase RHM3 from Arabidopsis thaliana (Mouse-ear cress).